Here is a 445-residue protein sequence, read N- to C-terminus: GTPase Der (445 aa).

EngA-type G domains are found at residues 3-167 (PVIA…YAGQ) and 180-353 (IKIA…AAAM). GTP-binding positions include 9–16 (GRPNVGKS), 56–60 (DTGGF), 119–122 (NKAE), 186–193 (GRPNVGKS), 233–237 (DTAGL), and 298–301 (NKWD). One can recognise a KH-like domain in the interval 354-438 (AKLPTPKLTR…PLRIEFRSSN (85 aa)).

The protein belongs to the TRAFAC class TrmE-Era-EngA-EngB-Septin-like GTPase superfamily. EngA (Der) GTPase family. As to quaternary structure, associates with the 50S ribosomal subunit.

In terms of biological role, GTPase that plays an essential role in the late steps of ribosome biogenesis. This chain is GTPase Der, found in Burkholderia ambifaria (strain MC40-6).